A 927-amino-acid chain; its full sequence is Autophagy-related protein 13 (927 aa).

Disordered stretches follow at residues 1–66, 334–359, 388–559, 628–716, and 786–927; these read MHQQ…PPAD, SLPQQHATSRAPAAEAGSLRDHRSKP, LRSV…AQPG, TESM…TIRE, and QMQL…RRGW. A compositionally biased stretch (polar residues) spans 14 to 30; the sequence is PGATTQPNLPSRSNSTR. Polar residues-rich tracts occupy residues 393 to 402, 513 to 523, and 544 to 557; these read QPGSDTSSPP, PASTSRYSSSF, and GSSGRQSLASSVAQ. Residues 630-671 show a composition bias toward low complexity; that stretch reads SMTSSVQMQRSSSSSSRQLTSVPGMTAPASVSASSSPGKPLS. The span at 684–716 shows a compositional bias: polar residues; it reads LSENSIIDYSGQGRITSRQGRTSDNTQPGTIRE. The segment covering 793–803 has biased composition (basic and acidic residues); that stretch reads STQRPSDRLEP. A compositionally biased stretch (polar residues) spans 850 to 868; that stretch reads HKQTPPQSSRGSFNGSLNR. Basic and acidic residues predominate over residues 891-901; the sequence is PQGRRSIEEAR.

It belongs to the ATG13 family. Fungi subfamily. As to quaternary structure, hypophosphorylated form interacts with ATG1 to form the ATG1-ATG13 kinase complex. The ATG1-ATG13 complex interacts with the ATG17-ATG29-ATG31 complex through direct interaction with ATG17.

It is found in the cytoplasm. It localises to the preautophagosomal structure. In terms of biological role, activates the ATG1 kinase in a nutritional condition dependent manner through the TOR pathway, leading to autophagy. Involved in ATG9 and ATG23 cycling through the pre-autophagosomal structure. Also involved in cytoplasm to vacuole transport (Cvt) and more specifically in Cvt vesicle formation. Seems to play a role in the switching machinery regulating the conversion between the Cvt pathway and autophagy. Finally, ATG13 is also required for glycogen storage during stationary phase. Autophagy is required for proper vegetative growth, asexual/sexual reproduction, and full virulence. Autophagy is particularly involved in the biosynthesis of deoxynivalenol (DON), an important virulence determinant. The polypeptide is Autophagy-related protein 13 (Gibberella zeae (strain ATCC MYA-4620 / CBS 123657 / FGSC 9075 / NRRL 31084 / PH-1) (Wheat head blight fungus)).